Reading from the N-terminus, the 523-residue chain is MPAVGGIPPSGGNRKVYPGNLTLYVTVTCVVAAMGGLIFGYDIGISGGVTSMDSFLKKFFPSVYRKKKADESSNQYCQYDSQTLTMFTSSLYLAALIASLVASTITRKFGRKLSMLFGGVLFCAGAIINGAAKAVWMLILGRILLGFGIGFANQSVPLYLSEMAPYKYRGALNIGFQLSITIGILVANVLNYFFAKIKGGWGWRLSLGGAMVPALIITVGSLVLPDTPNSMIERGQHEEARAHLKRVRGVEDVDEEFTDLVHASEDSKKVEHPWRNLLQRKYRPHLSMAIAIPFFQQLTGINVIMFYAPVLFDTIGFGSDAALMSAVITGLVNVFATMVSIYGVDKWGRRFLFLEGGVQMLICQAIVAACIGAKFGVDGAPGDLPQWYAVVVVLFICIYVSGFAWSWGPLGWLVPSEIFPLEIRSAAQSVNVSVNMFFTFVVAQVFLIMLCHLKFGLFIFFSFFVLIMSIFVYYFLPETKGIPIEEMGQVWKQHWYWSRYVVDEDYPNGGLEMGKEGRIPKNV.

At 1–25 (MPAVGGIPPSGGNRKVYPGNLTLYV) the chain is on the cytoplasmic side. 12 helical membrane-spanning segments follow: residues 26-46 (TVTC…IGIS), 86-106 (MFTS…STIT), 120-140 (VLFC…MLIL), 143-163 (ILLG…LSEM), 172-192 (LNIG…VLNY), 205-225 (LSLG…LVLP), 298-320 (LTGI…FGSD), 327-347 (VITG…VDKW), 351-371 (FLFL…AACI), 387-407 (WYAV…AWSW), 433-453 (SVNM…LCHL), and 456-476 (GLFI…YYFL). At 477–523 (PETKGIPIEEMGQVWKQHWYWSRYVVDEDYPNGGLEMGKEGRIPKNV) the chain is on the cytoplasmic side.

This sequence belongs to the major facilitator superfamily. Sugar transporter (TC 2.A.1.1) family.

The protein localises to the membrane. In Ricinus communis (Castor bean), this protein is Sugar carrier protein C (STC).